Here is a 934-residue protein sequence, read N- to C-terminus: Protein unc-45 homolog B (934 aa).

TPR repeat units lie at residues 9–42 (SVQLKEEGNKHFQAGEIDQAIDCYTKAIKTCKKE), 48–81 (AVIYRNRSACFLKKENYSNAASDATKAIDVDAAD), and 83–115 (KALYRRCQAFEKLGKLDMAFKDVQRCATIEPKN). 3 ARM repeats span residues 174 to 213 (DAGAERIFQNNGVPLLMQLIDTGKPEMILAAIRTLSGMCT), 216 to 255 (RARATAIIHSVGISKLCSIMAVDNEEIALATANLFQCVND), and 753 to 792 (DKLRVKILKEKALPEIENYMFEDHEQIRQAATECMCNLVC).

In terms of assembly, interacts with apobec2a, apobec2b, hsp90a.1, hsp90a.2, hsp90ab1 and myosin. As to expression, expressed in striated muscle tissue including somites, heart and craniofacial muscle. Detected in mesoderm adjacent to the dorsal midline during the late gastrula stages and in somitic mesoderm during development of trunk skeletal muscle. Also expressed in cranial skeletal muscle and in cardiac and smooth muscle. Detected in somitic muscle and heart primordium of 24 hour embryos. At later stages, expressed in muscles of pectoral fins, jaw, branchial arches and eye.

The protein resides in the cytoplasm. Its subcellular location is the myofibril. It localises to the sarcomere. It is found in the z line. The protein localises to the a band. The protein resides in the perinuclear region. Functionally, acts as a co-chaperone for HSP90 and is required for proper folding of the myosin motor domain. Plays a role in sarcomere formation during muscle cell development. Required for myoseptal integrity, myofiber attachment, motility and craniofacial development. Is necessary for normal early lens development. This Danio rerio (Zebrafish) protein is Protein unc-45 homolog B.